The primary structure comprises 314 residues: Tudor-interacting repair regulator protein (314 aa).

The N-myristoyl glycine moiety is linked to residue Gly-2.

It belongs to the Nudix hydrolase family. TIRR subfamily. Interacts (via the cytoplasmic part) with syndecan-4 (SDC4), but not with other syndecan proteins. In terms of processing, myristoylated in vitro; additional evidence is however required to confirm myristoylation in vivo. As to expression, ubiquitously expressed. Expressed in embryonic brain, eyes, gizzard, heart, intestine, kidney, liver, tibia and skin.

The protein localises to the nucleus. It localises to the cytoplasm. It is found in the cytoskeleton. The protein resides in the cell membrane. Its subcellular location is the cell junction. The protein localises to the focal adhesion. Functionally, key regulator of TP53BP1 required to stabilize TP53BP1 and regulate its recruitment to chromatin. The protein is Tudor-interacting repair regulator protein (NUDT16L1) of Gallus gallus (Chicken).